The sequence spans 889 residues: DNA mismatch repair protein MutS (889 aa).

620–627 serves as a coordination point for ATP; that stretch reads GPNMAGKS. The segment at 812–831 is disordered; it reads AAAPSGAARRGRPAREKEPG.

This sequence belongs to the DNA mismatch repair MutS family.

Its function is as follows. This protein is involved in the repair of mismatches in DNA. It is possible that it carries out the mismatch recognition step. This protein has a weak ATPase activity. The chain is DNA mismatch repair protein MutS from Syntrophobacter fumaroxidans (strain DSM 10017 / MPOB).